We begin with the raw amino-acid sequence, 217 residues long: Somatotropin (217 aa).

An N-terminal signal peptide occupies residues 1–24 (MAAGSWTSLLLAFTLLCLPQLREA). Zn(2+) is bound at residue His-44. A disulfide bridge links Cys-79 with Cys-191. A Phosphoserine modification is found at Ser-132. Glu-200 lines the Zn(2+) pocket. A disulfide bridge links Cys-208 with Cys-215.

Belongs to the somatotropin/prolactin family.

It localises to the secreted. Functionally, plays an important role in growth control. Its major role in stimulating body growth is to stimulate the liver and other tissues to secrete IGF1. It stimulates both the differentiation and proliferation of myoblasts. It also stimulates amino acid uptake and protein synthesis in muscle and other tissues. The chain is Somatotropin (GH1) from Callithrix jacchus (White-tufted-ear marmoset).